The sequence spans 328 residues: 17-beta-hydroxysteroid dehydrogenase type 1 (328 aa).

NADP(+) contacts are provided by residues 10-38 and D66; that span reads GCSS…ATLR. Position 135 is a phosphoserine; by PKA (S135). Substrate is bound at residue S143. The active-site Proton acceptor is Y156. K160 provides a ligand contact to NADP(+). Residues 291–328 form a disordered region; sequence KAEAGAEAGGGAGPGAEDEAGRGAVGDPELGDPPAAPQ.

It belongs to the short-chain dehydrogenases/reductases (SDR) family. Homodimer. Exists predominantly as a homodimer but also exits as monomer.

The protein resides in the cytoplasm. The catalysed reaction is 17beta-estradiol + NAD(+) = estrone + NADH + H(+). It carries out the reaction 17beta-estradiol + NADP(+) = estrone + NADPH + H(+). The enzyme catalyses testosterone + NADP(+) = androst-4-ene-3,17-dione + NADPH + H(+). It functions in the pathway steroid biosynthesis; estrogen biosynthesis. Favors the reduction of estrogens and androgens. Converts estrone (E1) to a more potent estrogen, 17beta-estradiol (E2). Also has 20-alpha-HSD activity. Uses preferentially NADH. The polypeptide is 17-beta-hydroxysteroid dehydrogenase type 1 (Homo sapiens (Human)).